The following is a 197-amino-acid chain: Recombination protein RecR (197 aa).

The C4-type zinc-finger motif lies at 57 to 72 (CSTCFGITESDPCHLC). The Toprim domain maps to 79-174 (ASICVVEEPQ…KVTRLAHGIP (96 aa)).

This sequence belongs to the RecR family.

Its function is as follows. May play a role in DNA repair. It seems to be involved in an RecBC-independent recombinational process of DNA repair. It may act with RecF and RecO. This Geotalea uraniireducens (strain Rf4) (Geobacter uraniireducens) protein is Recombination protein RecR.